The chain runs to 215 residues: Cytochrome b6 (215 aa).

A helical membrane pass occupies residues isoleucine 32–phenylalanine 52. Cysteine 35 serves as a coordination point for heme c. Heme b-binding residues include histidine 86 and histidine 100. Transmembrane regions (helical) follow at residues alanine 90–phenylalanine 110, leucine 116–tyrosine 136, and leucine 186–isoleucine 206. Positions 187 and 202 each coordinate heme b.

This sequence belongs to the cytochrome b family. PetB subfamily. In terms of assembly, the 4 large subunits of the cytochrome b6-f complex are cytochrome b6, subunit IV (17 kDa polypeptide, PetD), cytochrome f and the Rieske protein, while the 4 small subunits are PetG, PetL, PetM and PetN. The complex functions as a dimer. Requires heme b as cofactor. Heme c serves as cofactor.

The protein localises to the plastid. Its subcellular location is the chloroplast thylakoid membrane. Functionally, component of the cytochrome b6-f complex, which mediates electron transfer between photosystem II (PSII) and photosystem I (PSI), cyclic electron flow around PSI, and state transitions. The protein is Cytochrome b6 of Nephroselmis olivacea (Green alga).